Consider the following 67-residue polypeptide: Large ribosomal subunit protein bL32c (67 aa).

Belongs to the bacterial ribosomal protein bL32 family.

Its subcellular location is the plastid. The protein localises to the chloroplast. In Chara vulgaris (Common stonewort), this protein is Large ribosomal subunit protein bL32c.